The sequence spans 255 residues: Small ribosomal subunit protein uS2 (255 aa).

A disordered region spans residues 230–255; the sequence is QSSSGRDLGASSEVPVEPALEEAAEG.

It belongs to the universal ribosomal protein uS2 family.

The sequence is that of Small ribosomal subunit protein uS2 from Rhizobium leguminosarum bv. trifolii (strain WSM2304).